Here is a 543-residue protein sequence, read N- to C-terminus: Glucose transporter HT1 (543 aa).

A disordered region spans residues 1–24; the sequence is MPEYPTEDTNASGKTSGSSPDDHT. Over 1–38 the chain is Cytoplasmic; sequence MPEYPTEDTNASGKTSGSSPDDHTDDNAPSFFSCENLC. Residues 7–19 are compositionally biased toward polar residues; sequence EDTNASGKTSGSS. Residues 39-59 traverse the membrane as a helical segment; the sequence is IVQVPVSTGSLNGFSIGFVAV. The Extracellular portion of the chain corresponds to 60-120; the sequence is YMHLYEIFSG…GSGYNSLESG (61 aa). Residues N90 and N91 are each glycosylated (N-linked (GlcNAc...) asparagine). A helical transmembrane segment spans residues 121–141; the sequence is LFACSMIVGSMIGSIFAGKFL. Residues 142-147 lie on the Cytoplasmic side of the membrane; sequence SKFGLK. The chain crosses the membrane as a helical span at residues 148–168; that stretch reads MSFIVSGVLGIVGSALIHVAT. The Extracellular portion of the chain corresponds to 169-172; sequence RGST. The chain crosses the membrane as a helical span at residues 173–193; the sequence is LWVMCVGRFLMGLVLGLVCVA. Residues 194-212 lie on the Cytoplasmic side of the membrane; it reads SPMYVNENAHPKYRKTIGV. Residues 213–233 form a helical membrane-spanning segment; sequence LFQVFTTFGIMFAALLGLAIV. Residues 234–248 are Extracellular-facing; sequence KTPGHDKASGLLWRM. A helical membrane pass occupies residues 249–269; the sequence is QVFCSVSTALSALLLVLGLVV. The Cytoplasmic segment spans residues 270–300; that stretch reads RKSKTSFAGGVDSAGEGVLDPNEYSVRQMLG. The helical transmembrane segment at 301-321 threads the bilayer; the sequence is PLAVGAVTAGTLQLTGINAVM. Topologically, residues 322–337 are extracellular; that stretch reads NYAPEIMRNIGMDPME. A helical transmembrane segment spans residues 338-358; that stretch reads GNSAVMSWNFVTALVAIPLVS. Residues 359-364 are Cytoplasmic-facing; the sequence is RFTMRQ. Residues 365-385 form a helical membrane-spanning segment; that stretch reads LFLACSFMASCACLIMCGIPV. Over 386–400 the chain is Extracellular; sequence YPGVASVDNRNIVAT. A helical membrane pass occupies residues 401 to 421; it reads VGIAVFIAAFEFGVGSCFFVL. At 422–436 the chain is on the cytoplasmic side; it reads AQDLFPRSFRPTGSS. The helical transmembrane segment at 437-457 threads the bilayer; it reads FVVMAQFIFNIMINLLYPITV. Residues 458 to 470 lie on the Extracellular side of the membrane; it reads EAISGGKGKSPEK. Residues 471-491 traverse the membrane as a helical segment; the sequence is GQSVSFIIFGIIGIICFVLQL. Residues 492–543 lie on the Cytoplasmic side of the membrane; it reads RYLTPWEDGQGTSTSPTARCNAPTSPNNGEGEPATADMSPVEMSTPKHSGAA. The segment covering 503–519 has biased composition (polar residues); the sequence is TSTSPTARCNAPTSPNN. Positions 503–543 are disordered; the sequence is TSTSPTARCNAPTSPNNGEGEPATADMSPVEMSTPKHSGAA.

This sequence belongs to the major facilitator superfamily. Sugar transporter (TC 2.A.1.1) family.

It is found in the membrane. In terms of biological role, facilitative glucose transporter. Binds D-fructose and cytochalasin-B, but not D-galactose. The sequence is that of Glucose transporter HT1 (HT1) from Trypanosoma vivax (Duttonella vivax).